Here is a 198-residue protein sequence, read N- to C-terminus: Recombination protein RecR (198 aa).

The C4-type zinc finger occupies 58-73 (CSICGNFTDSDPCAIC). The Toprim domain occupies 81–175 (SIICVIEEPK…KVTRIAHGIP (95 aa)).

It belongs to the RecR family.

In terms of biological role, may play a role in DNA repair. It seems to be involved in an RecBC-independent recombinational process of DNA repair. It may act with RecF and RecO. This Clostridium kluyveri (strain NBRC 12016) protein is Recombination protein RecR.